Here is a 393-residue protein sequence, read N- to C-terminus: S-adenosylmethionine synthase 2 (393 aa).

Residue Glu9 participates in Mg(2+) binding. His15 serves as a coordination point for ATP. Glu43 serves as a coordination point for K(+). Residues Glu56 and Gln99 each coordinate L-methionine. ATP-binding positions include 167 to 169 (DGK), 235 to 238 (SGRF), Asp246, 252 to 253 (RK), Ala269, Lys273, and Lys277. Residue Asp246 participates in L-methionine binding. L-methionine is bound at residue Lys277.

Belongs to the AdoMet synthase family. In terms of assembly, homotetramer. It depends on Mn(2+) as a cofactor. Requires Mg(2+) as cofactor. The cofactor is Co(2+). K(+) serves as cofactor. As to expression, mostly expressed in roots. Also present in stems and leaves.

The protein localises to the cytoplasm. The catalysed reaction is L-methionine + ATP + H2O = S-adenosyl-L-methionine + phosphate + diphosphate. The protein operates within amino-acid biosynthesis; S-adenosyl-L-methionine biosynthesis; S-adenosyl-L-methionine from L-methionine: step 1/1. Catalyzes the formation of S-adenosylmethionine from methionine and ATP. The reaction comprises two steps that are both catalyzed by the same enzyme: formation of S-adenosylmethionine (AdoMet) and triphosphate, and subsequent hydrolysis of the triphosphate. In Solanum lycopersicum (Tomato), this protein is S-adenosylmethionine synthase 2 (SAM2).